Reading from the N-terminus, the 398-residue chain is MITDVWKYRGKSTGELRSSVCYAIKTGVFDYAKQFPSSRNLEKFGEARQDLTIKELAEKFLALKETEVAKTSLNTYRAVIKNILSIIGEKNLASSINKEKLLEVRKELLTGYQIPKSNYIVTQPGRSAVTVNNYMTNLNAVFQFGVDNGYLADNPFKGISPLKESRTIPDPLSREEFIRLIDACRNQQAKNLWCVSVYTGVRPGELCALGWEDIDLKNGTMMIRRNLAKDRFTVPKTQAGTNRVIHLIKPAIDALRSQMTLTRLSKEHIIDVHFREYGRTEKQKCTFVFQPEVSARVKNYGDHFTVDSIRQMWDAAIKRAGLRHRKSYQSRHTYACWSLTAGANPAFIANQMGHADAQMVFQVYGKWMSENNNAQVALLNTQLSEFAPTMPHNEAMKN.

Residues 51–146 (LTIKELAEKF…NLNAVFQFGV (96 aa)) form the Core-binding (CB) domain. A Tyr recombinase domain is found at 167-378 (TIPDPLSREE…SENNNAQVAL (212 aa)). Catalysis depends on residues arginine 202, lysine 236, arginine 331, and histidine 354. Tyrosine 364 (O-(3'-phospho-DNA)-tyrosine intermediate) is an active-site residue.

Belongs to the 'phage' integrase family.

Its function is as follows. Integrase is necessary for integration of the phage into the host genome by site-specific recombination. In conjunction with excisionase, integrase is also necessary for excision of the prophage from the host genome. The polypeptide is Putative defective protein IntQ (intQ) (Escherichia coli (strain K12)).